Here is a 381-residue protein sequence, read N- to C-terminus: Dof zinc finger protein 2 (381 aa).

The tract at residues 19-81 (MLMGANPNPN…ARPQKEKALN (63 aa)) is disordered. 2 stretches are compositionally biased toward low complexity: residues 23-32 (ANPNPNGSSN) and 40-59 (SAASAQRPIAPPAAGAAAGA). Positions 68 to 79 (TERRARPQKEKA) are enriched in basic and acidic residues. A Dof-type zinc finger spans residues 80–134 (LNCPRCNSTNTKFCYYNNYSLQQPRYFCKTCRRYWTEGGSLRNVPVGGGSRKNKR). Positions 82, 85, 107, and 110 each coordinate Zn(2+). The interval 329–349 (AGDANSGGDHQYDHGKNQGGG) is disordered.

The protein localises to the nucleus. Its function is as follows. Transcription factor that may transactivate seed storage protein genes in developing seeds. The sequence is that of Dof zinc finger protein 2 from Oryza sativa subsp. japonica (Rice).